We begin with the raw amino-acid sequence, 162 residues long: Peptide deformylase (162 aa).

Residues Cys-91 and His-133 each contribute to the Fe cation site. Residue Glu-134 is part of the active site. Fe cation is bound at residue His-137.

This sequence belongs to the polypeptide deformylase family. Fe(2+) serves as cofactor.

The catalysed reaction is N-terminal N-formyl-L-methionyl-[peptide] + H2O = N-terminal L-methionyl-[peptide] + formate. In terms of biological role, removes the formyl group from the N-terminal Met of newly synthesized proteins. Requires at least a dipeptide for an efficient rate of reaction. N-terminal L-methionine is a prerequisite for activity but the enzyme has broad specificity at other positions. In Finegoldia magna (strain ATCC 29328 / DSM 20472 / WAL 2508) (Peptostreptococcus magnus), this protein is Peptide deformylase.